Here is a 494-residue protein sequence, read N- to C-terminus: Catalase A (494 aa).

Polar residues predominate over residues 1–23 (MTDRPTITTTAGAPVPDNQNSLT). A disordered region spans residues 1-25 (MTDRPTITTTAGAPVPDNQNSLTAG). Residues His-55 and Asn-127 contribute to the active site. Residue Tyr-337 participates in heme binding.

Belongs to the catalase family. The cofactor is heme.

It localises to the periplasm. The enzyme catalyses 2 H2O2 = O2 + 2 H2O. Functionally, decomposes hydrogen peroxide into water and oxygen; serves to protect cells from the toxic effects of hydrogen peroxide. The chain is Catalase A (katA) from Rhizobium meliloti (strain 1021) (Ensifer meliloti).